The sequence spans 854 residues: MAAFSGETAVKGIHLINDDGELLPEADINDFLISALAGKGSSDILYRTGVNYHVVGVFGGQSSGKSTLLNSLFQTEFMTMDEAHHRGQTTKGAFMTRAILDAQTHRKEREEGEGADLLKREKPQPLFVLDFEGTDGIERGEDQNFERQLSLFALSVADILIINMWAVDVGRFNAANMNLLRTVFEVNLQLFSHGSYVKEEKPTLLVVLRDFTENDPAPSFETVRKSFDKIWGNIQKPESFTDATIDVVFDLRYRVLPHYKLQRPEFDSAVSEFREWFVSPKNSNFLFSNCSMFRGVPADGMPSYLSNCWNAICSSKDLDIPTQRDMLARHRCADAKHAAIEEFKEVCEEYTKKIQRGDVIPQFTRALEETIERLLKNFSDQTKLYKVSVVHETAEALEEELGDMELHLLKQYAKSIAVTVLAALDGVIGSSVDEAVRWLQNEARSVLLLEGKDNKGDRIDGGGLAQGVLDTAEGLVDNKRCRLFVEEFWKRICLSLQGAFDMLNGCSKSHQAALSSLYGKFATAIMDDQAVREGVAHAAMEGAQHKLRNRFVAMAENAAETVHQVFEQALTSKTDGTVRFFRTTDGLLGAEKQARQAGLVLLGCLLYYRLKLVPVEVDAGEVEGEGTTRALQRLVRDRCRFQVRDNRTEKNFFLHFTNISDVPRYPLDAPTSVVDSGDTTADTVNADNVLLSHNALQCAFHLYKQKADFTLQMQLRNIESGKQSLPPWVLPVMLLLGWNELYYLLTSPILLIAIIVIAVLFFKTFLKSQLEVLEEKCPVWLVVSVKALLQQAQALQNAYAPTEAVRGGGGGAQFRDPTQATSVSGASAGVSSESSSAASPRRRVCRESRDKGED.

Residues 1-724 (MAAFSGETAV…LRNIESGKQS (724 aa)) are Cytoplasmic-facing. One can recognise a GB1/RHD3-type G domain in the interval 49–291 (GVNYHVVGVF…NSNFLFSNCS (243 aa)). 59 to 66 (GGQSSGKS) contacts GTP. Residues 336-386 (KHAAIEEFKEVCEEYTKKIQRGDVIPQFTRALEETIERLLKNFSDQTKLYK) adopt a coiled-coil conformation. The helical transmembrane segment at 725–745 (LPPWVLPVMLLLGWNELYYLL) threads the bilayer. Over 746 to 748 (TSP) the chain is Lumenal. A helical membrane pass occupies residues 749–769 (ILLIAIIVIAVLFFKTFLKSQ). Topologically, residues 770–854 (LEVLEEKCPV…CRESRDKGED (85 aa)) are cytoplasmic. Positions 808–854 (GGGGAQFRDPTQATSVSGASAGVSSESSSAASPRRRVCRESRDKGED) are disordered. A compositionally biased stretch (low complexity) spans 822–839 (SVSGASAGVSSESSSAAS). Positions 845–854 (CRESRDKGED) are enriched in basic and acidic residues.

It belongs to the TRAFAC class dynamin-like GTPase superfamily. GB1/RHD3 GTPase family. RHD3 subfamily.

It localises to the endoplasmic reticulum membrane. Probable GTP-binding protein that may be involved in cell development. The sequence is that of Protein SEY1 homolog from Trypanosoma brucei brucei (strain 927/4 GUTat10.1).